The following is a 355-amino-acid chain: UPF0324 membrane protein PA5383 (355 aa).

The next 10 membrane-spanning stretches (helical) occupy residues 20 to 37, 44 to 66, 71 to 93, 100 to 122, 137 to 159, 166 to 188, 233 to 255, 275 to 297, 307 to 324, and 331 to 353; these read IPGL…ILLG, HNGI…TLYP, GSAA…LYGL, IAGV…FGLA, TLLI…EPVV, VAVA…PALF, AVIA…SAWL, WFAV…PALV, LLAM…LSAI, and PLLL…TRLA.

The protein belongs to the UPF0324 family.

The protein resides in the cell membrane. In Pseudomonas aeruginosa (strain ATCC 15692 / DSM 22644 / CIP 104116 / JCM 14847 / LMG 12228 / 1C / PRS 101 / PAO1), this protein is UPF0324 membrane protein PA5383.